Here is a 511-residue protein sequence, read N- to C-terminus: Cobyric acid synthase (511 aa).

One can recognise a GATase cobBQ-type domain in the interval 251 to 443 (LLDIAIICLP…IHGIFDNDVF (193 aa)). C332 serves as the catalytic Nucleophile. Residue H435 is part of the active site.

This sequence belongs to the CobB/CobQ family. CobQ subfamily.

The protein operates within cofactor biosynthesis; adenosylcobalamin biosynthesis. Functionally, catalyzes amidations at positions B, D, E, and G on adenosylcobyrinic A,C-diamide. NH(2) groups are provided by glutamine, and one molecule of ATP is hydrogenolyzed for each amidation. The polypeptide is Cobyric acid synthase (Listeria monocytogenes serovar 1/2a (strain ATCC BAA-679 / EGD-e)).